A 458-amino-acid polypeptide reads, in one-letter code: Cysteine--tRNA ligase (458 aa).

Cysteine 29 provides a ligand contact to Zn(2+). Positions 31–41 (PTVYDNPHIGN) match the 'HIGH' region motif. Cysteine 214, histidine 239, and glutamate 243 together coordinate Zn(2+). Residues 272–276 (KMSKS) carry the 'KMSKS' region motif. Lysine 275 is an ATP binding site.

It belongs to the class-I aminoacyl-tRNA synthetase family. As to quaternary structure, monomer. Requires Zn(2+) as cofactor.

The protein localises to the cytoplasm. The catalysed reaction is tRNA(Cys) + L-cysteine + ATP = L-cysteinyl-tRNA(Cys) + AMP + diphosphate. In Rickettsia bellii (strain OSU 85-389), this protein is Cysteine--tRNA ligase.